Consider the following 212-residue polypeptide: Large ribosomal subunit protein uL1 (212 aa).

The protein belongs to the universal ribosomal protein uL1 family. As to quaternary structure, part of the 50S ribosomal subunit.

Functionally, binds directly to 23S rRNA. Probably involved in E site tRNA release. Its function is as follows. Protein L1 is also a translational repressor protein, it controls the translation of its operon by binding to its mRNA. The protein is Large ribosomal subunit protein uL1 of Methanosphaera stadtmanae (strain ATCC 43021 / DSM 3091 / JCM 11832 / MCB-3).